Here is a 608-residue protein sequence, read N- to C-terminus: Putative multicopper oxidase GMC1 (608 aa).

Plastocyanin-like domains lie at 51–163 (INGY…LIVE), 243–374 (LING…ELYR), and 421–548 (ERTF…FEVP). Residues H100, H102, H145, and H147 each coordinate Cu cation. Residues H452, H455, H457, H530, C531, H532, and H536 each coordinate Cu cation.

It belongs to the multicopper oxidase family. It depends on Cu cation as a cofactor.

Functionally, could be an iron transport multicopper oxidase, which is required for Fe(2+) high affinity uptake. May be required to oxidize Fe(2+) and release it from the transporter. Essential component of copper-dependent iron transport. Involved in meiotic prophase and synaptonemal complex (SC) assembly. The protein is Putative multicopper oxidase GMC1 (GMC1) of Saccharomyces cerevisiae (strain ATCC 204508 / S288c) (Baker's yeast).